We begin with the raw amino-acid sequence, 200 residues long: 3-isopropylmalate dehydratase small subunit (200 aa).

Belongs to the LeuD family. LeuD type 1 subfamily. In terms of assembly, heterodimer of LeuC and LeuD.

The catalysed reaction is (2R,3S)-3-isopropylmalate = (2S)-2-isopropylmalate. Its pathway is amino-acid biosynthesis; L-leucine biosynthesis; L-leucine from 3-methyl-2-oxobutanoate: step 2/4. Functionally, catalyzes the isomerization between 2-isopropylmalate and 3-isopropylmalate, via the formation of 2-isopropylmaleate. This chain is 3-isopropylmalate dehydratase small subunit, found in Vibrio parahaemolyticus serotype O3:K6 (strain RIMD 2210633).